The sequence spans 187 residues: Elongation factor P (187 aa).

Belongs to the elongation factor P family.

Its subcellular location is the cytoplasm. It functions in the pathway protein biosynthesis; polypeptide chain elongation. Functionally, involved in peptide bond synthesis. Stimulates efficient translation and peptide-bond synthesis on native or reconstituted 70S ribosomes in vitro. Probably functions indirectly by altering the affinity of the ribosome for aminoacyl-tRNA, thus increasing their reactivity as acceptors for peptidyl transferase. The protein is Elongation factor P of Roseobacter denitrificans (strain ATCC 33942 / OCh 114) (Erythrobacter sp. (strain OCh 114)).